We begin with the raw amino-acid sequence, 230 residues long: Ribonuclease 3 (230 aa).

Residues 10–133 (DPRLQSRIGY…IIGAIYVDSN (124 aa)) form the RNase III domain. A Mg(2+)-binding site is contributed by glutamate 46. Aspartate 50 is a catalytic residue. Mg(2+)-binding residues include aspartate 119 and glutamate 122. Residue glutamate 122 is part of the active site. The 70-residue stretch at 161 to 230 (DPKSRLQEYL…AAEILKLLEQ (70 aa)) folds into the DRBM domain.

Belongs to the ribonuclease III family. As to quaternary structure, homodimer. Mg(2+) serves as cofactor.

The protein localises to the cytoplasm. The enzyme catalyses Endonucleolytic cleavage to 5'-phosphomonoester.. Digests double-stranded RNA. Involved in the processing of primary rRNA transcript to yield the immediate precursors to the large and small rRNAs (23S and 16S). Processes some mRNAs, and tRNAs when they are encoded in the rRNA operon. Processes pre-crRNA and tracrRNA of type II CRISPR loci if present in the organism. The polypeptide is Ribonuclease 3 (Acinetobacter baylyi (strain ATCC 33305 / BD413 / ADP1)).